A 71-amino-acid polypeptide reads, in one-letter code: Translational regulator CsrA (71 aa).

This sequence belongs to the CsrA/RsmA family. Homodimer; the beta-strands of each monomer intercalate to form a hydrophobic core, while the alpha-helices form wings that extend away from the core.

Its subcellular location is the cytoplasm. Its function is as follows. A translational regulator that binds mRNA to regulate translation initiation and/or mRNA stability. Usually binds in the 5'-UTR at or near the Shine-Dalgarno sequence preventing ribosome-binding, thus repressing translation. Its main target seems to be the major flagellin gene, while its function is anatagonized by FliW. In Clostridium botulinum (strain Alaska E43 / Type E3), this protein is Translational regulator CsrA.